The sequence spans 332 residues: MHKKILVLGAGAWGTALALQLAYKGHEVRINSWKAEHNDQMLAEGNNQKYLPSIEKFPDTLKAIQNWQASIEYFDDILVATPSSGFKKTIFELKDCMLPHQNIISATKGFCHDTYALLSEIAEDIIPNTKFALLTGPSFAKEVANKLPTAVVVASKDIEYAKYTQKLFSNENFRCYTTTDIIGAQVGGAVKNVLAIAAGIAAGMDFGVNAHAALITRGLAEIKKLGLKLGADVETFMGLSCLGDLLLTCSDNQSRNRRFGYYLGQGMSIEESLHKVNNVVEGYSTAIAVYKLAQKHEVDMPLVFATYRVLYENVDPKDMVRQLMTRQLKNEN.

W13, K34, and K108 together coordinate NADPH. Sn-glycerol 3-phosphate is bound by residues K108, G136, and S138. NADPH is bound at residue A140. K191, D244, S254, R255, and N256 together coordinate sn-glycerol 3-phosphate. Residue K191 is the Proton acceptor of the active site. Position 255 (R255) interacts with NADPH. NADPH is bound by residues V279 and E281.

The protein belongs to the NAD-dependent glycerol-3-phosphate dehydrogenase family.

Its subcellular location is the cytoplasm. The catalysed reaction is sn-glycerol 3-phosphate + NAD(+) = dihydroxyacetone phosphate + NADH + H(+). It catalyses the reaction sn-glycerol 3-phosphate + NADP(+) = dihydroxyacetone phosphate + NADPH + H(+). The protein operates within membrane lipid metabolism; glycerophospholipid metabolism. Catalyzes the reduction of the glycolytic intermediate dihydroxyacetone phosphate (DHAP) to sn-glycerol 3-phosphate (G3P), the key precursor for phospholipid synthesis. The sequence is that of Glycerol-3-phosphate dehydrogenase [NAD(P)+] from Francisella philomiragia subsp. philomiragia (strain ATCC 25017 / CCUG 19701 / FSC 153 / O#319-036).